Consider the following 389-residue polypeptide: Protein Wnt-10b (389 aa).

The signal sequence occupies residues 1–28; sequence MLEEPRPRPPPSGLAGLLFLALCSRALS. Thr46 carries the phosphothreonine modification. Intrachain disulfides connect Cys83–Cys94, Cys136–Cys144, Cys146–Cys199, Cys247–Cys261, Cys249–Cys256, Cys318–Cys349, Cys334–Cys344, Cys348–Cys388, Cys364–Cys379, Cys366–Cys376, and Cys371–Cys372. The N-linked (GlcNAc...) asparagine glycan is linked to Asn93. Positions 171–197 are disordered; the sequence is KSFPHSLPSPGPGSSPSPGPQDTWEWG. A compositionally biased stretch (pro residues) spans 177-189; sequence LPSPGPGSSPSPG. Ser253 carries the O-palmitoleoyl serine; by PORCN lipid modification. A glycan (N-linked (GlcNAc...) asparagine) is linked at Asn335.

The protein belongs to the Wnt family. In terms of assembly, forms a soluble 1:1 complex with AFM; this prevents oligomerization and is required for prolonged biological activity. The complex with AFM may represent the physiological form in body fluids. Palmitoleoylation is required for efficient binding to frizzled receptors. Depalmitoleoylation leads to Wnt signaling pathway inhibition. Detected in most adult tissues. Highest levels were found in heart and skeletal muscle. Low levels are found in brain.

It localises to the secreted. It is found in the extracellular space. Its subcellular location is the extracellular matrix. In terms of biological role, member of the Wnt ligand gene family that encodes for secreted proteins, which activate the Wnt signaling cascade. Specifically activates canonical Wnt/beta-catenin signaling and thus triggers beta-catenin/LEF/TCF-mediated transcriptional programs. Involved in signaling networks controlling stemness, pluripotency and cell fate decisions. Acts in the immune system, mammary gland, adipose tissue, bone and skin. In Homo sapiens (Human), this protein is Protein Wnt-10b (WNT10B).